A 293-amino-acid chain; its full sequence is Ribosomal protein L11 methyltransferase (293 aa).

S-adenosyl-L-methionine is bound by residues Thr-145, Gly-166, Asp-188, and Asn-230.

This sequence belongs to the methyltransferase superfamily. PrmA family.

The protein localises to the cytoplasm. It catalyses the reaction L-lysyl-[protein] + 3 S-adenosyl-L-methionine = N(6),N(6),N(6)-trimethyl-L-lysyl-[protein] + 3 S-adenosyl-L-homocysteine + 3 H(+). Its function is as follows. Methylates ribosomal protein L11. The polypeptide is Ribosomal protein L11 methyltransferase (Citrobacter koseri (strain ATCC BAA-895 / CDC 4225-83 / SGSC4696)).